Consider the following 251-residue polypeptide: Xylose/arabinose import ATP-binding protein XylG (251 aa).

Positions 5–241 (LEIRDVHKSF…EITEVMTSFA (237 aa)) constitute an ABC transporter domain. Position 37–44 (37–44 (GDNGAGKS)) interacts with ATP.

The protein belongs to the ABC transporter superfamily. The complex is composed of two ATP-binding proteins (XylG), two transmembrane proteins (XylH) and a solute-binding protein (XylF).

The protein localises to the cell membrane. It catalyses the reaction D-xylose(out) + ATP + H2O = D-xylose(in) + ADP + phosphate + H(+). It carries out the reaction L-arabinose(out) + ATP + H2O = L-arabinose(in) + ADP + phosphate + H(+). In terms of biological role, part of the ABC transporter complex XylFGH involved in the uptake of xylose and arabinose. Responsible for energy coupling to the transport system. The protein is Xylose/arabinose import ATP-binding protein XylG of Sulfolobus acidocaldarius (strain ATCC 33909 / DSM 639 / JCM 8929 / NBRC 15157 / NCIMB 11770).